We begin with the raw amino-acid sequence, 715 residues long: Polyribonucleotide nucleotidyltransferase (715 aa).

D497 and D503 together coordinate Mg(2+). A KH domain is found at P564 to I623. The region spanning G633–L701 is the S1 motif domain.

This sequence belongs to the polyribonucleotide nucleotidyltransferase family. It depends on Mg(2+) as a cofactor.

It localises to the cytoplasm. It catalyses the reaction RNA(n+1) + phosphate = RNA(n) + a ribonucleoside 5'-diphosphate. Its function is as follows. Involved in mRNA degradation. Catalyzes the phosphorolysis of single-stranded polyribonucleotides processively in the 3'- to 5'-direction. This Crocosphaera subtropica (strain ATCC 51142 / BH68) (Cyanothece sp. (strain ATCC 51142)) protein is Polyribonucleotide nucleotidyltransferase.